A 425-amino-acid polypeptide reads, in one-letter code: GTPase Obg (425 aa).

The Obg domain maps to 1 to 158 (MFVDQVKVYV…RYIVMELKLI (158 aa)). The segment at 118 to 144 (KGGRGGRGNNRFANSSNPAPHISENGE) is disordered. One can recognise an OBG-type G domain in the interval 159 to 327 (ADVGLVGYPS…LMYAIGDTLA (169 aa)). ATP is bound by residues 165 to 172 (GYPSVGKS), 190 to 194 (FTTLT), 211 to 214 (DLPG), 281 to 284 (NKME), and 308 to 310 (SAA). 2 residues coordinate Mg(2+): Ser172 and Thr192. The region spanning 348–425 (RAEKEPDAFE…IGKLEFDFVE (78 aa)) is the OCT domain.

The protein belongs to the TRAFAC class OBG-HflX-like GTPase superfamily. OBG GTPase family. Monomer. Mg(2+) serves as cofactor.

Its subcellular location is the cytoplasm. Functionally, an essential GTPase which binds GTP, GDP and possibly (p)ppGpp with moderate affinity, with high nucleotide exchange rates and a fairly low GTP hydrolysis rate. Plays a role in control of the cell cycle, stress response, ribosome biogenesis and in those bacteria that undergo differentiation, in morphogenesis control. The chain is GTPase Obg from Brevibacillus brevis (strain 47 / JCM 6285 / NBRC 100599).